Consider the following 35-residue polypeptide: RCHFVICTTDCRRNSPGTYGECVKKEKGKECVCKS.

3 disulfides stabilise this stretch: Cys2–Cys22, Cys7–Cys31, and Cys11–Cys33.

The protein belongs to the short scorpion toxin superfamily. Potassium channel inhibitor family. Expressed by the venom gland.

It is found in the secreted. Its function is as follows. Blocks Kv1.6/KCNA6 potassium channels. The chain is Tamulustoxin-2 from Hottentotta tamulus (Eastern Indian scorpion).